The primary structure comprises 345 residues: Phosphoribosylformylglycinamidine cyclo-ligase (345 aa).

The protein belongs to the AIR synthase family.

The protein localises to the cytoplasm. The catalysed reaction is 2-formamido-N(1)-(5-O-phospho-beta-D-ribosyl)acetamidine + ATP = 5-amino-1-(5-phospho-beta-D-ribosyl)imidazole + ADP + phosphate + H(+). It functions in the pathway purine metabolism; IMP biosynthesis via de novo pathway; 5-amino-1-(5-phospho-D-ribosyl)imidazole from N(2)-formyl-N(1)-(5-phospho-D-ribosyl)glycinamide: step 2/2. The sequence is that of Phosphoribosylformylglycinamidine cyclo-ligase from Escherichia coli (strain SE11).